The primary structure comprises 120 residues: Photosystem II extrinsic protein U (120 aa).

Positions 1-29 are cleaved as a signal peptide; the sequence is MKRLLSLLTGVLVMTGLLMALIFPQSAYA.

The protein belongs to the PsbU family. As to quaternary structure, PSII is composed of 1 copy each of membrane proteins PsbA, PsbB, PsbC, PsbD, PsbE, PsbF, PsbH, PsbI, PsbJ, PsbK, PsbL, PsbM, PsbT, PsbX, PsbY, Psb30/Ycf12, peripheral proteins PsbO, CyanoQ (PsbQ), PsbU, PsbV and a large number of cofactors. It forms dimeric complexes.

The protein resides in the cellular thylakoid membrane. One of the extrinsic, lumenal subunits of photosystem II (PSII). PSII is a light-driven water plastoquinone oxidoreductase, using light energy to abstract electrons from H(2)O, generating a proton gradient subsequently used for ATP formation. The extrinsic proteins stabilize the structure of photosystem II oxygen-evolving complex (OEC), the ion environment of oxygen evolution and protect the OEC against heat-induced inactivation. In Prochlorococcus marinus (strain MIT 9313), this protein is Photosystem II extrinsic protein U.